A 354-amino-acid chain; its full sequence is Putative cinnamyl alcohol dehydrogenase 4 (354 aa).

The Zn(2+) site is built by Cys-47, His-69, Glu-70, Cys-100, Cys-103, Cys-106, Cys-114, and Cys-163. NADP(+)-binding positions include Thr-167, 188-193 (GLGGLG), 211-216 (STSESK), Thr-251, and 297-299 (SVT).

This sequence belongs to the zinc-containing alcohol dehydrogenase family. Homodimer. It depends on Zn(2+) as a cofactor.

The catalysed reaction is (E)-cinnamyl alcohol + NADP(+) = (E)-cinnamaldehyde + NADPH + H(+). It catalyses the reaction (E)-coniferol + NADP(+) = (E)-coniferaldehyde + NADPH + H(+). The enzyme catalyses (E)-sinapyl alcohol + NADP(+) = (E)-sinapaldehyde + NADPH + H(+). It carries out the reaction (E)-4-coumaroyl alcohol + NADP(+) = (E)-4-coumaraldehyde + NADPH + H(+). The catalysed reaction is (E)-caffeyl alcohol + NADP(+) = (E)-caffeyl aldehyde + NADPH + H(+). The protein operates within aromatic compound metabolism; phenylpropanoid biosynthesis. In terms of biological role, involved in lignin biosynthesis. Catalyzes the final step specific for the production of lignin monomers. Catalyzes the NADPH-dependent reduction of coniferaldehyde, 5-hydroxyconiferaldehyde, sinapaldehyde, 4-coumaraldehyde and caffeyl aldehyde to their respective alcohols. This Oryza sativa subsp. japonica (Rice) protein is Putative cinnamyl alcohol dehydrogenase 4.